A 272-amino-acid chain; its full sequence is 4-hydroxy-tetrahydrodipicolinate reductase (272 aa).

NAD(+) is bound by residues 10–15 (GAGGRM), Glu36, 100–102 (GTT), and 124–127 (SGNM). His157 (proton donor/acceptor) is an active-site residue. His158 contributes to the (S)-2,3,4,5-tetrahydrodipicolinate binding site. The Proton donor role is filled by Lys161. A (S)-2,3,4,5-tetrahydrodipicolinate-binding site is contributed by 167-168 (GT).

It belongs to the DapB family.

It is found in the cytoplasm. It carries out the reaction (S)-2,3,4,5-tetrahydrodipicolinate + NAD(+) + H2O = (2S,4S)-4-hydroxy-2,3,4,5-tetrahydrodipicolinate + NADH + H(+). The catalysed reaction is (S)-2,3,4,5-tetrahydrodipicolinate + NADP(+) + H2O = (2S,4S)-4-hydroxy-2,3,4,5-tetrahydrodipicolinate + NADPH + H(+). It functions in the pathway amino-acid biosynthesis; L-lysine biosynthesis via DAP pathway; (S)-tetrahydrodipicolinate from L-aspartate: step 4/4. In terms of biological role, catalyzes the conversion of 4-hydroxy-tetrahydrodipicolinate (HTPA) to tetrahydrodipicolinate. This is 4-hydroxy-tetrahydrodipicolinate reductase from Afipia carboxidovorans (strain ATCC 49405 / DSM 1227 / KCTC 32145 / OM5) (Oligotropha carboxidovorans).